The following is a 384-amino-acid chain: Monomeric sarcosine oxidase (384 aa).

6–36 (DVIVIGLGGMGSAAAHHLSARGARVLGLEKF) contributes to the FAD binding site. Residue Cys-315 is modified to S-8alpha-FAD cysteine.

The protein belongs to the MSOX/MTOX family. MSOX subfamily. As to quaternary structure, monomer. FAD is required as a cofactor.

The protein localises to the cytoplasm. The catalysed reaction is sarcosine + O2 + H2O = formaldehyde + glycine + H2O2. Catalyzes the oxidative demethylation of sarcosine. In Streptomyces avermitilis (strain ATCC 31267 / DSM 46492 / JCM 5070 / NBRC 14893 / NCIMB 12804 / NRRL 8165 / MA-4680), this protein is Monomeric sarcosine oxidase.